Reading from the N-terminus, the 130-residue chain is Small ribosomal subunit protein uS11 (130 aa).

The protein belongs to the universal ribosomal protein uS11 family. Part of the 30S ribosomal subunit. Interacts with proteins S7 and S18. Binds to IF-3.

Its function is as follows. Located on the platform of the 30S subunit, it bridges several disparate RNA helices of the 16S rRNA. Forms part of the Shine-Dalgarno cleft in the 70S ribosome. In Alkalilimnicola ehrlichii (strain ATCC BAA-1101 / DSM 17681 / MLHE-1), this protein is Small ribosomal subunit protein uS11.